The following is a 399-amino-acid chain: CCA-adding enzyme (399 aa).

The ATP site is built by Gly-28 and Arg-31. CTP-binding residues include Gly-28 and Arg-31. The Mg(2+) site is built by Asp-41 and Asp-43. ATP-binding residues include Arg-112, Asp-155, Arg-158, Arg-161, and Arg-164. CTP-binding residues include Arg-112, Asp-155, Arg-158, Arg-161, and Arg-164.

This sequence belongs to the tRNA nucleotidyltransferase/poly(A) polymerase family. Bacterial CCA-adding enzyme type 3 subfamily. In terms of assembly, homodimer. The cofactor is Mg(2+).

It catalyses the reaction a tRNA precursor + 2 CTP + ATP = a tRNA with a 3' CCA end + 3 diphosphate. The enzyme catalyses a tRNA with a 3' CCA end + 2 CTP + ATP = a tRNA with a 3' CCACCA end + 3 diphosphate. Functionally, catalyzes the addition and repair of the essential 3'-terminal CCA sequence in tRNAs without using a nucleic acid template. Adds these three nucleotides in the order of C, C, and A to the tRNA nucleotide-73, using CTP and ATP as substrates and producing inorganic pyrophosphate. tRNA 3'-terminal CCA addition is required both for tRNA processing and repair. Also involved in tRNA surveillance by mediating tandem CCA addition to generate a CCACCA at the 3' terminus of unstable tRNAs. While stable tRNAs receive only 3'-terminal CCA, unstable tRNAs are marked with CCACCA and rapidly degraded. The sequence is that of CCA-adding enzyme from Staphylococcus saprophyticus subsp. saprophyticus (strain ATCC 15305 / DSM 20229 / NCIMB 8711 / NCTC 7292 / S-41).